Here is a 335-residue protein sequence, read N- to C-terminus: Biotin synthase (335 aa).

Positions 46 to 274 constitute a Radical SAM core domain; it reads YNIQLASLFS…KSKIRLSAGR (229 aa). Cysteine 61, cysteine 65, and cysteine 68 together coordinate [4Fe-4S] cluster. Residues cysteine 105, cysteine 137, cysteine 197, and arginine 269 each contribute to the [2Fe-2S] cluster site.

It belongs to the radical SAM superfamily. Biotin synthase family. Homodimer. It depends on [4Fe-4S] cluster as a cofactor. The cofactor is [2Fe-2S] cluster.

It carries out the reaction (4R,5S)-dethiobiotin + (sulfur carrier)-SH + 2 reduced [2Fe-2S]-[ferredoxin] + 2 S-adenosyl-L-methionine = (sulfur carrier)-H + biotin + 2 5'-deoxyadenosine + 2 L-methionine + 2 oxidized [2Fe-2S]-[ferredoxin]. It participates in cofactor biosynthesis; biotin biosynthesis; biotin from 7,8-diaminononanoate: step 2/2. Catalyzes the conversion of dethiobiotin (DTB) to biotin by the insertion of a sulfur atom into dethiobiotin via a radical-based mechanism. The protein is Biotin synthase of Prochlorococcus marinus (strain AS9601).